The following is a 325-amino-acid chain: Putative HTH-type transcriptional regulatory protein MK1005 (325 aa).

Positions 128 to 190 (VDELDVSRVR…FERRVAELLE (63 aa)) constitute an HTH cro/C1-type domain. A DNA-binding region (H-T-H motif) is located at residues 139 to 158 (RQLRREGGRITLARAEEADV).

This chain is Putative HTH-type transcriptional regulatory protein MK1005, found in Methanopyrus kandleri (strain AV19 / DSM 6324 / JCM 9639 / NBRC 100938).